We begin with the raw amino-acid sequence, 248 residues long: 1-(5-phosphoribosyl)-5-[(5-phosphoribosylamino)methylideneamino] imidazole-4-carboxamide isomerase (248 aa).

Aspartate 8 functions as the Proton acceptor in the catalytic mechanism. The active-site Proton donor is aspartate 131.

It belongs to the HisA/HisF family.

It is found in the cytoplasm. It carries out the reaction 1-(5-phospho-beta-D-ribosyl)-5-[(5-phospho-beta-D-ribosylamino)methylideneamino]imidazole-4-carboxamide = 5-[(5-phospho-1-deoxy-D-ribulos-1-ylimino)methylamino]-1-(5-phospho-beta-D-ribosyl)imidazole-4-carboxamide. It functions in the pathway amino-acid biosynthesis; L-histidine biosynthesis; L-histidine from 5-phospho-alpha-D-ribose 1-diphosphate: step 4/9. This Cupriavidus taiwanensis (strain DSM 17343 / BCRC 17206 / CCUG 44338 / CIP 107171 / LMG 19424 / R1) (Ralstonia taiwanensis (strain LMG 19424)) protein is 1-(5-phosphoribosyl)-5-[(5-phosphoribosylamino)methylideneamino] imidazole-4-carboxamide isomerase.